A 136-amino-acid polypeptide reads, in one-letter code: Small ribosomal subunit protein eS19 (136 aa).

Lys-23 carries the post-translational modification N6-acetyllysine. Residue Arg-67 is modified to Omega-N-methylarginine. N6-acetyllysine is present on residues Lys-111 and Lys-115. Residues 116–136 (DQDGGRKLTPQGQRDLDRIAG) are disordered.

It belongs to the eukaryotic ribosomal protein eS19 family. As to quaternary structure, component of the small ribosomal subunit. Part of the small subunit (SSU) processome, composed of more than 70 proteins and the RNA chaperone small nucleolar RNA (snoRNA) U3. Interacts with RPS19BP1; the interaction is direct and mediates the integration of RPS19 in state post-A1. Interacts with RPS19BP1.

It localises to the cytoplasm. It is found in the nucleus. Its subcellular location is the nucleolus. Its function is as follows. Component of the small ribosomal subunit. The ribosome is a large ribonucleoprotein complex responsible for the synthesis of proteins in the cell. Required for pre-rRNA processing and maturation of 40S ribosomal subunits. Part of the small subunit (SSU) processome, first precursor of the small eukaryotic ribosomal subunit. During the assembly of the SSU processome in the nucleolus, many ribosome biogenesis factors, an RNA chaperone and ribosomal proteins associate with the nascent pre-rRNA and work in concert to generate RNA folding, modifications, rearrangements and cleavage as well as targeted degradation of pre-ribosomal RNA by the RNA exosome. The polypeptide is Small ribosomal subunit protein eS19 (RPS19) (Sus scrofa (Pig)).